A 206-amino-acid chain; its full sequence is MISKKKSNSSNRWLSEHFQDQYVKEAKKQKIRSRSWFKLEEIDKNNRLFKPGMNVLDLGSSPGGWSQYAAKKIGKKGYILACDILPMKKIKGVDFFQGDFCNKKTLNLILTNLSNVNLNLIMSDMAPNITGCSSIDMPRIIEICKTVFTISDHVLSRNGVVLVKSFQGEGFNEFFAQMKNLFSKIKICKPKTSRSRSREIFMLATR.

G63, W65, D83, D99, and D124 together coordinate S-adenosyl-L-methionine. K164 acts as the Proton acceptor in catalysis.

Belongs to the class I-like SAM-binding methyltransferase superfamily. RNA methyltransferase RlmE family.

It is found in the cytoplasm. The catalysed reaction is uridine(2552) in 23S rRNA + S-adenosyl-L-methionine = 2'-O-methyluridine(2552) in 23S rRNA + S-adenosyl-L-homocysteine + H(+). Functionally, specifically methylates the uridine in position 2552 of 23S rRNA at the 2'-O position of the ribose in the fully assembled 50S ribosomal subunit. The protein is Ribosomal RNA large subunit methyltransferase E of Buchnera aphidicola subsp. Schizaphis graminum (strain Sg).